The following is a 255-amino-acid chain: Putative ankyrin repeat protein R880 (255 aa).

5 ANK repeats span residues 79–109, 110–139, 141–169, 171–199, and 201–229; these read SGINNYLLTACKYGHCKLVKYFVECGADIHY, KTDYALQLACKYGYLEIVKYLVKKGANINT, DCYAVQLASREGHLKIVKYLVELGTNVRK, RDLAFRWSVENNHLSVTKYLVELGSDVRS, and KNYAIKKSCEYGYFEMTQYLMNQGANFRV.

This chain is Putative ankyrin repeat protein R880, found in Acanthamoeba polyphaga (Amoeba).